The sequence spans 317 residues: tRNA dimethylallyltransferase (317 aa).

14–21 (GPTASGKS) contacts ATP. 16–21 (TASGKS) provides a ligand contact to substrate. Interaction with substrate tRNA stretches follow at residues 39–42 (DSVL) and 163–167 (QRIQR).

Belongs to the IPP transferase family. In terms of assembly, monomer. The cofactor is Mg(2+).

It catalyses the reaction adenosine(37) in tRNA + dimethylallyl diphosphate = N(6)-dimethylallyladenosine(37) in tRNA + diphosphate. Its function is as follows. Catalyzes the transfer of a dimethylallyl group onto the adenine at position 37 in tRNAs that read codons beginning with uridine, leading to the formation of N6-(dimethylallyl)adenosine (i(6)A). The protein is tRNA dimethylallyltransferase of Xylella fastidiosa (strain 9a5c).